The primary structure comprises 326 residues: Phospho-N-acetylmuramoyl-pentapeptide-transferase (326 aa).

A run of 10 helical transmembrane segments spans residues 3 to 23 (LPTK…PYFI), 51 to 71 (TPTM…LFWV), 77 to 97 (ILLL…DDYL), 113 to 133 (ILIQ…YFTE), 143 to 163 (GIMI…VVGS), 175 to 195 (GLAA…AYMT), 199 to 219 (ISVI…LWFN), 225 to 245 (IFMG…TSVL), 250 to 270 (VLFA…VIQV), and 306 to 326 (IVIK…AFLL).

The protein belongs to the glycosyltransferase 4 family. MraY subfamily. Mg(2+) is required as a cofactor.

It localises to the cell membrane. It catalyses the reaction UDP-N-acetyl-alpha-D-muramoyl-L-alanyl-gamma-D-glutamyl-meso-2,6-diaminopimeloyl-D-alanyl-D-alanine + di-trans,octa-cis-undecaprenyl phosphate = di-trans,octa-cis-undecaprenyl diphospho-N-acetyl-alpha-D-muramoyl-L-alanyl-D-glutamyl-meso-2,6-diaminopimeloyl-D-alanyl-D-alanine + UMP. Its pathway is cell wall biogenesis; peptidoglycan biosynthesis. Functionally, catalyzes the initial step of the lipid cycle reactions in the biosynthesis of the cell wall peptidoglycan: transfers peptidoglycan precursor phospho-MurNAc-pentapeptide from UDP-MurNAc-pentapeptide onto the lipid carrier undecaprenyl phosphate, yielding undecaprenyl-pyrophosphoryl-MurNAc-pentapeptide, known as lipid I. The polypeptide is Phospho-N-acetylmuramoyl-pentapeptide-transferase (Wolbachia sp. subsp. Brugia malayi (strain TRS)).